Here is a 280-residue protein sequence, read N- to C-terminus: Probable endonuclease 4 (280 aa).

9 residues coordinate Zn(2+): H69, H109, E145, D179, H182, H216, D229, H231, and E261.

It belongs to the AP endonuclease 2 family. Zn(2+) serves as cofactor.

It catalyses the reaction Endonucleolytic cleavage to 5'-phosphooligonucleotide end-products.. Endonuclease IV plays a role in DNA repair. It cleaves phosphodiester bonds at apurinic or apyrimidinic (AP) sites, generating a 3'-hydroxyl group and a 5'-terminal sugar phosphate. This chain is Probable endonuclease 4, found in Erwinia tasmaniensis (strain DSM 17950 / CFBP 7177 / CIP 109463 / NCPPB 4357 / Et1/99).